The primary structure comprises 125 residues: UPF0102 protein CCNA_00142 (125 aa).

The protein belongs to the UPF0102 family.

The protein is UPF0102 protein CCNA_00142 of Caulobacter vibrioides (strain NA1000 / CB15N) (Caulobacter crescentus).